The primary structure comprises 436 residues: 3-ketoacyl-CoA thiolase (436 aa).

The active-site Acyl-thioester intermediate is the C99. Catalysis depends on proton acceptor residues H392 and C422.

The protein belongs to the thiolase-like superfamily. Thiolase family. Heterotetramer of two alpha chains (FadJ) and two beta chains (FadI).

It is found in the cytoplasm. The catalysed reaction is an acyl-CoA + acetyl-CoA = a 3-oxoacyl-CoA + CoA. It functions in the pathway lipid metabolism; fatty acid beta-oxidation. In terms of biological role, catalyzes the final step of fatty acid oxidation in which acetyl-CoA is released and the CoA ester of a fatty acid two carbons shorter is formed. The chain is 3-ketoacyl-CoA thiolase from Salmonella paratyphi A (strain AKU_12601).